Consider the following 459-residue polypeptide: Phosphoglucosamine mutase (459 aa).

Ser112 functions as the Phosphoserine intermediate in the catalytic mechanism. Residues Ser112, Asp249, Asp251, and Asp253 each contribute to the Mg(2+) site. Position 112 is a phosphoserine (Ser112).

Belongs to the phosphohexose mutase family. Mg(2+) is required as a cofactor. Activated by phosphorylation.

The catalysed reaction is alpha-D-glucosamine 1-phosphate = D-glucosamine 6-phosphate. Functionally, catalyzes the conversion of glucosamine-6-phosphate to glucosamine-1-phosphate. The sequence is that of Phosphoglucosamine mutase from Synechococcus sp. (strain RCC307).